A 443-amino-acid chain; its full sequence is Probable glycine dehydrogenase (decarboxylating) subunit 1 (443 aa).

The protein belongs to the GcvP family. N-terminal subunit subfamily. The glycine cleavage system is composed of four proteins: P, T, L and H. In this organism, the P 'protein' is a heterodimer of two subunits.

The catalysed reaction is N(6)-[(R)-lipoyl]-L-lysyl-[glycine-cleavage complex H protein] + glycine + H(+) = N(6)-[(R)-S(8)-aminomethyldihydrolipoyl]-L-lysyl-[glycine-cleavage complex H protein] + CO2. Its function is as follows. The glycine cleavage system catalyzes the degradation of glycine. The P protein binds the alpha-amino group of glycine through its pyridoxal phosphate cofactor; CO(2) is released and the remaining methylamine moiety is then transferred to the lipoamide cofactor of the H protein. This Nitratidesulfovibrio vulgaris (strain ATCC 29579 / DSM 644 / CCUG 34227 / NCIMB 8303 / VKM B-1760 / Hildenborough) (Desulfovibrio vulgaris) protein is Probable glycine dehydrogenase (decarboxylating) subunit 1.